A 1098-amino-acid chain; its full sequence is Probable DNA-directed RNA polymerase (1098 aa).

The span at 1–24 (PIRESVRVSTDRDPDLEDEKREQL) shows a compositional bias: basic and acidic residues. The interval 1 to 26 (PIRESVRVSTDRDPDLEDEKREQLGE) is disordered. Residues D663, K750, and D915 contribute to the active site.

It belongs to the phage and mitochondrial RNA polymerase family.

It localises to the mitochondrion. The enzyme catalyses RNA(n) + a ribonucleoside 5'-triphosphate = RNA(n+1) + diphosphate. DNA-dependent RNA polymerase catalyzes the transcription of DNA into RNA using the four ribonucleoside triphosphates as substrates. The chain is Probable DNA-directed RNA polymerase from Zea mays (Maize).